Here is a 132-residue protein sequence, read N- to C-terminus: Small ribosomal subunit protein uS8 (132 aa).

Belongs to the universal ribosomal protein uS8 family. As to quaternary structure, part of the 30S ribosomal subunit. Contacts proteins S5 and S12.

In terms of biological role, one of the primary rRNA binding proteins, it binds directly to 16S rRNA central domain where it helps coordinate assembly of the platform of the 30S subunit. The chain is Small ribosomal subunit protein uS8 from Borreliella afzelii (strain PKo) (Borrelia afzelii).